The following is a 149-amino-acid chain: F420H(2)-dependent quinone reductase MT1299 (149 aa).

Residues 48-50, 54-59, 70-73, 81-85, and Tyr130 each bind coenzyme F420-(gamma-Glu)n; these read AKT, RTTSLT, VASK, and GWYHN.

The protein belongs to the F420H(2)-dependent quinone reductase family.

It is found in the cell membrane. It carries out the reaction oxidized coenzyme F420-(gamma-L-Glu)(n) + a quinol + H(+) = reduced coenzyme F420-(gamma-L-Glu)(n) + a quinone. Its function is as follows. Involved in a F420-dependent anti-oxidant mechanism that protects M.tuberculosis against oxidative stress and bactericidal agents. Catalyzes the F420H(2)-dependent two-electron reduction of quinones to dihydroquinones, thereby preventing the formation of cytotoxic semiquinones obtained by the one-electron reduction pathway. In vitro, catalyzes the reduction of menadione to menadiol; since menaquinone is the sole quinone electron carrier in the respiratory chain in M.tuberculosis, the physiological electron acceptor for Fqr-mediated F420H(2) oxidation is therefore likely to be the endogenous menaquinone found in the membrane fraction of M.tuberculosis. In Mycobacterium tuberculosis (strain CDC 1551 / Oshkosh), this protein is F420H(2)-dependent quinone reductase MT1299.